A 130-amino-acid chain; its full sequence is Keratin-associated protein 12-1 (130 aa).

14 consecutive repeat copies span residues 10–14 (CQPSC), 15–29 (CVSS…VSSP), 34–38 (CFVSS), 40–44 (CQPSC), 45–49 (CVSSS), 60–64 (CIPVR), 85–89 (CQSSV), 90–94 (CVPVS), 95–99 (CRPVC), 104–108 (CQSSG), 109–113 (CCQPS), 114–118 (CPTLV), 119–123 (CKPVT), and 124–128 (CSNPS). The 14 X 5 AA approximate repeats stretch occupies residues 10–128 (CQPSCCVSSS…CKPVTCSNPS (119 aa)).

Belongs to the KRTAP type 12 family. As to quaternary structure, interacts with hair keratins. As to expression, expressed only in the head and back skin of a 3 day old mouse. Not expressed in adult skin.

Its function is as follows. In the hair cortex, hair keratin intermediate filaments are embedded in an interfilamentous matrix, consisting of hair keratin-associated proteins (KRTAP), which are essential for the formation of a rigid and resistant hair shaft through their extensive disulfide bond cross-linking with abundant cysteine residues of hair keratins. The matrix proteins include the high-sulfur and high-glycine-tyrosine keratins. The polypeptide is Keratin-associated protein 12-1 (Mus musculus (Mouse)).